An 896-amino-acid polypeptide reads, in one-letter code: Isoleucine--tRNA ligase (896 aa).

The 'HIGH' region signature appears at 57–67; the sequence is PYANNNIHIGH. Glu-543 lines the L-isoleucyl-5'-AMP pocket. Residues 584–588 carry the 'KMSKS' region motif; the sequence is KMSKS. Residue Lys-587 participates in ATP binding. Cys-869, Cys-872, Cys-885, and Cys-888 together coordinate Zn(2+).

This sequence belongs to the class-I aminoacyl-tRNA synthetase family. IleS type 1 subfamily. In terms of assembly, monomer. Zn(2+) serves as cofactor.

The protein resides in the cytoplasm. It carries out the reaction tRNA(Ile) + L-isoleucine + ATP = L-isoleucyl-tRNA(Ile) + AMP + diphosphate. Functionally, catalyzes the attachment of isoleucine to tRNA(Ile). As IleRS can inadvertently accommodate and process structurally similar amino acids such as valine, to avoid such errors it has two additional distinct tRNA(Ile)-dependent editing activities. One activity is designated as 'pretransfer' editing and involves the hydrolysis of activated Val-AMP. The other activity is designated 'posttransfer' editing and involves deacylation of mischarged Val-tRNA(Ile). The chain is Isoleucine--tRNA ligase from Acholeplasma laidlawii (strain PG-8A).